The chain runs to 410 residues: uncharacterized protein (410 aa).

A run of 11 helical transmembrane segments spans residues 14 to 34 (IIIGTIFGRMATSMSIPFLAI), 48 to 68 (GLVIAASSSVGILASFYGGYI), 82 to 102 (IFGWMLVFAGFAAASNLWVFF), 140 to 160 (YAAINIGVVFGPVLGLYFGSS), 164 to 184 (TPFLVPAVIYGLYGIVLALQF), 212 to 232 (YLFTIALVGITLCTFGYSQFS), 251 to 271 (LYGLMLTLNAIVVLATQFPIV), 279 to 299 (PLCSLMLGNVMVSISMAIFTV), 303 to 323 (VPSIVMIVITFTIGEVLLFSM), 342 to 362 (GAIGFSQLGNVIGPWVGGICI), and 371 to 391 (IYIFSVLSGITLLGLPFLAFA).

This sequence belongs to the major facilitator superfamily. TCR/Tet family.

Its subcellular location is the cell membrane. This is an uncharacterized protein from Bacillus subtilis (strain 168).